Here is a 25-residue protein sequence, read N- to C-terminus: CKGKGASCRKTMYDCCRGSCRSGRC.

Intrachain disulfides connect C1-C16, C8-C20, and C15-C25. C25 carries the cysteine amide modification.

It belongs to the conotoxin O1 superfamily. As to expression, expressed by the venom duct.

It localises to the secreted. In terms of biological role, omega-conotoxins act at presynaptic membranes, they bind and block voltage-gated calcium channels (Cav). This toxin blocks N-, P- and Q-type calcium channels. It shows high activities on Cav2.1/CACNA1A (IC(50)=11 nM) and Cav2.2/CACNA1B (IC(50)=7.7 nM). In addition, it shows a higher potency when Cav2.2/CACNA1B is only expressed with the ancillary subunit CACNB3 (IC(50)=1.6 nM) than on Cav2.2/CACNA1B expressed with the ancillary subunits CACNA2D1 and CACNB3 (IC(50)=12 nM). Both the Cav2.2/CACNA1B block by this toxin and the recovery are voltage-independent. It is noteworthy that ancillary subunits beta do not modulate recovery from this toxin block, since Cav2.2/CACNA1B expressed with either the ancillary subunit CACNB2a (isoform 2a) or with CACNB3 exhibits moderate recovery. The protein is Omega-conotoxin CVIB of Conus catus (Cat cone).